The following is a 156-amino-acid chain: Ribosomal RNA large subunit methyltransferase H (156 aa).

S-adenosyl-L-methionine contacts are provided by residues Leu-73, Gly-104, and 123–128 (LSPLTL).

The protein belongs to the RNA methyltransferase RlmH family. In terms of assembly, homodimer.

Its subcellular location is the cytoplasm. The catalysed reaction is pseudouridine(1915) in 23S rRNA + S-adenosyl-L-methionine = N(3)-methylpseudouridine(1915) in 23S rRNA + S-adenosyl-L-homocysteine + H(+). Its function is as follows. Specifically methylates the pseudouridine at position 1915 (m3Psi1915) in 23S rRNA. In Serratia proteamaculans (strain 568), this protein is Ribosomal RNA large subunit methyltransferase H.